Reading from the N-terminus, the 515-residue chain is Bifunctional purine biosynthesis protein PurH (515 aa).

The MGS-like domain occupies 1 to 145 (MTKRVLISVS…KNHASVTVVV (145 aa)).

The protein belongs to the PurH family.

The catalysed reaction is (6R)-10-formyltetrahydrofolate + 5-amino-1-(5-phospho-beta-D-ribosyl)imidazole-4-carboxamide = 5-formamido-1-(5-phospho-D-ribosyl)imidazole-4-carboxamide + (6S)-5,6,7,8-tetrahydrofolate. The enzyme catalyses IMP + H2O = 5-formamido-1-(5-phospho-D-ribosyl)imidazole-4-carboxamide. The protein operates within purine metabolism; IMP biosynthesis via de novo pathway; 5-formamido-1-(5-phospho-D-ribosyl)imidazole-4-carboxamide from 5-amino-1-(5-phospho-D-ribosyl)imidazole-4-carboxamide (10-formyl THF route): step 1/1. It functions in the pathway purine metabolism; IMP biosynthesis via de novo pathway; IMP from 5-formamido-1-(5-phospho-D-ribosyl)imidazole-4-carboxamide: step 1/1. This chain is Bifunctional purine biosynthesis protein PurH, found in Streptococcus pneumoniae (strain P1031).